A 461-amino-acid polypeptide reads, in one-letter code: V-type ATP synthase beta chain 1 (461 aa).

This sequence belongs to the ATPase alpha/beta chains family.

Functionally, produces ATP from ADP in the presence of a proton gradient across the membrane. The V-type beta chain is a regulatory subunit. The protein is V-type ATP synthase beta chain 1 of Clostridium tetani (strain Massachusetts / E88).